A 179-amino-acid polypeptide reads, in one-letter code: 3-hydroxyanthranilate 3,4-dioxygenase (179 aa).

Arginine 47 provides a ligand contact to O2. Fe cation is bound by residues histidine 51, glutamate 57, and histidine 96. Glutamate 57 lines the substrate pocket. Residues arginine 100 and glutamate 110 each coordinate substrate. The Fe cation site is built by cysteine 125, cysteine 128, cysteine 162, and cysteine 165.

The protein belongs to the 3-HAO family. It depends on Fe(2+) as a cofactor.

The enzyme catalyses 3-hydroxyanthranilate + O2 = (2Z,4Z)-2-amino-3-carboxymuconate 6-semialdehyde. It participates in cofactor biosynthesis; NAD(+) biosynthesis; quinolinate from L-kynurenine: step 3/3. Functionally, catalyzes the oxidative ring opening of 3-hydroxyanthranilate to 2-amino-3-carboxymuconate semialdehyde, which spontaneously cyclizes to quinolinate. The polypeptide is 3-hydroxyanthranilate 3,4-dioxygenase (Bacillus thuringiensis (strain Al Hakam)).